A 296-amino-acid polypeptide reads, in one-letter code: Biliverdin reductase A (296 aa).

Positions 1–2 (MN) are excised as a propeptide. NADP(+) contacts are provided by residues 16-19 (VGRA), 44-46 (SRR), 77-80 (SSSH), and Tyr-98. The residue at position 174 (Thr-174) is a Phosphothreonine. 2 positions are modified to phosphoserine: Ser-178 and Ser-230. Residues Lys-248 and Lys-253 each carry the N6-acetyllysine modification. Residues His-280, Cys-281, Cys-292, and Cys-293 each coordinate Zn(2+).

This sequence belongs to the Gfo/Idh/MocA family. Biliverdin reductase subfamily. In terms of assembly, monomer. Requires Zn(2+) as cofactor. In terms of tissue distribution, liver.

The protein resides in the cytoplasm. The protein localises to the cytosol. It catalyses the reaction (4Z,15Z)-bilirubin IXalpha + NAD(+) = biliverdin IXalpha + NADH + H(+). The catalysed reaction is (4Z,15Z)-bilirubin IXalpha + NADP(+) = biliverdin IXalpha + NADPH + H(+). It functions in the pathway porphyrin-containing compound metabolism; protoheme degradation. Reduces the gamma-methene bridge of the open tetrapyrrole, biliverdin IXalpha, to bilirubin with the concomitant oxidation of a NADH or NADPH cofactor. Does not reduce bilirubin IXbeta. Uses the reactants NADH or NADPH depending on the pH; NADH is used at the acidic pH range (6-6.9) and NADPH at the alkaline range (8.5-8.7). NADPH, however, is the probable reactant in biological systems. This is Biliverdin reductase A from Homo sapiens (Human).